A 373-amino-acid polypeptide reads, in one-letter code: MAQLGPRRPLAPPGPPGTLPRPDSRAGARGTRDRVDDLGTDVDSIARIVNSVFVWRVVRADERLKIFRCLTVLTEPLCQVALPNPDPGRALFCEIFLYLTRPKALRLPPNTFFALFFFNRERRYCAIVHLRSVTHPLTPLLCTLTFARIRAATPPEETPDPTTEQLAEEPVVGELDGAYLVPAKTPPEPGACCALGPGAWWHLPSGQIYCWAMDSDLGSLCPPGSRARHLGWLLARITNHPGGCESCAPPPHIDSANALWLSSVVTESCPCVAPCLWAKMAQCTLAVQGDASLCPLLFGHPVDTVTLLQAPRRPCITDRLQEVVGGRCGADNIPPTSAGWRLCVFSSYISRLFATSCPTVARAVARASSSDPE.

The interval 1–35 (MAQLGPRRPLAPPGPPGTLPRPDSRAGARGTRDRV) is disordered. A compositionally biased stretch (pro residues) spans 9 to 19 (PLAPPGPPGTL). Over residues 22-35 (PDSRAGARGTRDRV) the composition is skewed to basic and acidic residues.

Belongs to the herpesviridae cytoplasmic envelopment protein 2 family. Interacts with cytoplasmic envelopment protein 3 and with the capsid.

Its subcellular location is the virion tegument. It is found in the host cytoplasm. The protein resides in the host nucleus. Plays a critical role in cytoplasmic virus egress. Participates in the final step of tegumentation and envelope acquisition within the host cytoplasm by directly interacting with the capsid. Upon virion binding to target cell, a signaling cascade is triggered to disrupt the interaction with the capsid, thereby preparing capsid uncoating. The chain is Cytoplasmic envelopment protein 2 (UL16) from Homo sapiens (Human).